The sequence spans 200 residues: Ribosome maturation factor RimP (200 aa).

Belongs to the RimP family.

Its subcellular location is the cytoplasm. Functionally, required for maturation of 30S ribosomal subunits. The chain is Ribosome maturation factor RimP from Polaromonas sp. (strain JS666 / ATCC BAA-500).